Consider the following 82-residue polypeptide: NAD(P)H-quinone oxidoreductase subunit O (82 aa).

The protein belongs to the complex I NdhO subunit family. In terms of assembly, NDH-1 can be composed of about 15 different subunits; different subcomplexes with different compositions have been identified which probably have different functions.

It is found in the cellular thylakoid membrane. It carries out the reaction a plastoquinone + NADH + (n+1) H(+)(in) = a plastoquinol + NAD(+) + n H(+)(out). The catalysed reaction is a plastoquinone + NADPH + (n+1) H(+)(in) = a plastoquinol + NADP(+) + n H(+)(out). In terms of biological role, NDH-1 shuttles electrons from an unknown electron donor, via FMN and iron-sulfur (Fe-S) centers, to quinones in the respiratory and/or the photosynthetic chain. The immediate electron acceptor for the enzyme in this species is believed to be plastoquinone. Couples the redox reaction to proton translocation, and thus conserves the redox energy in a proton gradient. Cyanobacterial NDH-1 also plays a role in inorganic carbon-concentration. The polypeptide is NAD(P)H-quinone oxidoreductase subunit O (Prochlorococcus marinus (strain MIT 9211)).